The primary structure comprises 205 residues: Thiamine-phosphate synthase (205 aa).

4-amino-2-methyl-5-(diphosphooxymethyl)pyrimidine contacts are provided by residues 37–41 and asparagine 69; that span reads QVREK. Residues aspartate 70 and aspartate 89 each coordinate Mg(2+). Serine 108 lines the 4-amino-2-methyl-5-(diphosphooxymethyl)pyrimidine pocket. 134–136 serves as a coordination point for 2-[(2R,5Z)-2-carboxy-4-methylthiazol-5(2H)-ylidene]ethyl phosphate; sequence TGS. Lysine 137 is a 4-amino-2-methyl-5-(diphosphooxymethyl)pyrimidine binding site. Residues glycine 165 and 185-186 each bind 2-[(2R,5Z)-2-carboxy-4-methylthiazol-5(2H)-ylidene]ethyl phosphate; that span reads IS.

It belongs to the thiamine-phosphate synthase family. The cofactor is Mg(2+).

The catalysed reaction is 2-[(2R,5Z)-2-carboxy-4-methylthiazol-5(2H)-ylidene]ethyl phosphate + 4-amino-2-methyl-5-(diphosphooxymethyl)pyrimidine + 2 H(+) = thiamine phosphate + CO2 + diphosphate. The enzyme catalyses 2-(2-carboxy-4-methylthiazol-5-yl)ethyl phosphate + 4-amino-2-methyl-5-(diphosphooxymethyl)pyrimidine + 2 H(+) = thiamine phosphate + CO2 + diphosphate. It catalyses the reaction 4-methyl-5-(2-phosphooxyethyl)-thiazole + 4-amino-2-methyl-5-(diphosphooxymethyl)pyrimidine + H(+) = thiamine phosphate + diphosphate. It functions in the pathway cofactor biosynthesis; thiamine diphosphate biosynthesis; thiamine phosphate from 4-amino-2-methyl-5-diphosphomethylpyrimidine and 4-methyl-5-(2-phosphoethyl)-thiazole: step 1/1. Its function is as follows. Condenses 4-methyl-5-(beta-hydroxyethyl)thiazole monophosphate (THZ-P) and 2-methyl-4-amino-5-hydroxymethyl pyrimidine pyrophosphate (HMP-PP) to form thiamine monophosphate (TMP). The chain is Thiamine-phosphate synthase from Clostridium botulinum (strain Kyoto / Type A2).